A 103-amino-acid polypeptide reads, in one-letter code: MTKFFEKRLTDVIKRPLITEKATKALDLNQYTFEVDPRAAKPDIKAAVEKMFDVKVLGISTMNPPRKSRRVGRFSGKRPQVKKAVVRLAEGNSIQLFPESEEA.

This sequence belongs to the universal ribosomal protein uL23 family. In terms of assembly, part of the 50S ribosomal subunit. Contacts protein L29, and trigger factor when it is bound to the ribosome.

Its function is as follows. One of the early assembly proteins it binds 23S rRNA. One of the proteins that surrounds the polypeptide exit tunnel on the outside of the ribosome. Forms the main docking site for trigger factor binding to the ribosome. In Prochlorococcus marinus (strain NATL1A), this protein is Large ribosomal subunit protein uL23.